The primary structure comprises 283 residues: Formamidopyrimidine-DNA glycosylase (283 aa).

Residue proline 2 is the Schiff-base intermediate with DNA of the active site. The active-site Proton donor is glutamate 3. The active-site Proton donor; for beta-elimination activity is lysine 58. DNA-binding residues include histidine 100, arginine 119, and arginine 162. An FPG-type zinc finger spans residues 247–283; the sequence is RVYGREGLPCVTPGCSGTVGRIVQSGRSSFHCPLCQR. The active-site Proton donor; for delta-elimination activity is arginine 273.

It belongs to the FPG family. In terms of assembly, monomer. Zn(2+) serves as cofactor.

The enzyme catalyses Hydrolysis of DNA containing ring-opened 7-methylguanine residues, releasing 2,6-diamino-4-hydroxy-5-(N-methyl)formamidopyrimidine.. It catalyses the reaction 2'-deoxyribonucleotide-(2'-deoxyribose 5'-phosphate)-2'-deoxyribonucleotide-DNA = a 3'-end 2'-deoxyribonucleotide-(2,3-dehydro-2,3-deoxyribose 5'-phosphate)-DNA + a 5'-end 5'-phospho-2'-deoxyribonucleoside-DNA + H(+). Functionally, involved in base excision repair of DNA damaged by oxidation or by mutagenic agents. Acts as a DNA glycosylase that recognizes and removes damaged bases. Has a preference for oxidized purines, such as 7,8-dihydro-8-oxoguanine (8-oxoG). Has AP (apurinic/apyrimidinic) lyase activity and introduces nicks in the DNA strand. Cleaves the DNA backbone by beta-delta elimination to generate a single-strand break at the site of the removed base with both 3'- and 5'-phosphates. This is Formamidopyrimidine-DNA glycosylase from Cereibacter sphaeroides (strain ATCC 17029 / ATH 2.4.9) (Rhodobacter sphaeroides).